Consider the following 235-residue polypeptide: uncharacterized protein (235 aa).

The next 7 membrane-spanning stretches (helical) occupy residues 2–22, 34–54, 56–76, 102–122, 147–167, 178–198, and 210–230; these read VIGPFINASAVLLGGVLGALL, MTSIFGLASLGIGILLVVKCA, LPAMVLATLLGALIGEICLLE, FIQNYVAIIVLFCASGTGIFG, MIFACSLGIAVSVISIPLLII, ILPLTTPSMMADFSAVGGLLL, and MFPVVNMLPALLLAMPLSAAW.

The protein localises to the cell membrane. This is an uncharacterized protein from Escherichia coli (strain K12).